A 346-amino-acid chain; its full sequence is Anthocyanidin 3-O-glucosyltransferase 2 (346 aa).

The UDP-alpha-D-glucose site is built by A221, Q223, H238, W241, N242, S243, and E246. A261 is a binding site for an anthocyanidin. 2 residues coordinate UDP-alpha-D-glucose: E262 and Q263.

The protein belongs to the UDP-glycosyltransferase family. Expressed in cotyledons, roots and leaves.

The enzyme catalyses an anthocyanidin + UDP-alpha-D-glucose + H(+) = an anthocyanidin 3-O-beta-D-glucoside + UDP. The protein operates within pigment biosynthesis; anthocyanin biosynthesis. Its function is as follows. In the presence of other necessary color factors, this glycosylation reaction allows the accumulation of anthocyanin pigments. The protein is Anthocyanidin 3-O-glucosyltransferase 2 (GT2) of Manihot esculenta (Cassava).